A 412-amino-acid chain; its full sequence is Multifunctional CCA protein (412 aa).

Residues G8 and R11 each coordinate ATP. CTP is bound by residues G8 and R11. Positions 21 and 23 each coordinate Mg(2+). ATP is bound by residues R91, R137, and R140. R91, R137, and R140 together coordinate CTP. Residues 228–329 enclose the HD domain; sequence TGIHTLMTLS…VKLFDSIDAW (102 aa).

It belongs to the tRNA nucleotidyltransferase/poly(A) polymerase family. Bacterial CCA-adding enzyme type 1 subfamily. Monomer. Can also form homodimers and oligomers. Requires Mg(2+) as cofactor. It depends on Ni(2+) as a cofactor.

The catalysed reaction is a tRNA precursor + 2 CTP + ATP = a tRNA with a 3' CCA end + 3 diphosphate. The enzyme catalyses a tRNA with a 3' CCA end + 2 CTP + ATP = a tRNA with a 3' CCACCA end + 3 diphosphate. Functionally, catalyzes the addition and repair of the essential 3'-terminal CCA sequence in tRNAs without using a nucleic acid template. Adds these three nucleotides in the order of C, C, and A to the tRNA nucleotide-73, using CTP and ATP as substrates and producing inorganic pyrophosphate. tRNA 3'-terminal CCA addition is required both for tRNA processing and repair. Also involved in tRNA surveillance by mediating tandem CCA addition to generate a CCACCA at the 3' terminus of unstable tRNAs. While stable tRNAs receive only 3'-terminal CCA, unstable tRNAs are marked with CCACCA and rapidly degraded. This Escherichia coli O81 (strain ED1a) protein is Multifunctional CCA protein.